The following is a 608-amino-acid chain: uncharacterized protein (608 aa).

Positions 1 to 21 are disordered; it reads MHTNSPLRADNQDLETQPLLR. At Thr24 the chain carries Phosphothreonine. A Phosphoserine modification is found at Ser27. The helical transmembrane segment at 55 to 75 threads the bilayer; it reads IIYLLGIVLLSFFGVSIVQYI. N-linked (GlcNAc...) asparagine glycans are attached at residues Asn115, Asn141, Asn169, Asn407, Asn425, Asn449, Asn453, Asn527, and Asn580.

The protein localises to the membrane. This is an uncharacterized protein from Saccharomyces cerevisiae (strain ATCC 204508 / S288c) (Baker's yeast).